The chain runs to 259 residues: MFIALTNDDGIQAPGLRAMYKALKEAGHTVQVVAPVTEQSAVGHAVTIALPLRVKIFAENGFQGMGVYGTPTDCVKLGLNALLDKKPDIVVSGINAGANVGPDILYSGTVSAATEAAHMGYPSLAVSYDNFKPDDIAAHARFAVEIMESMPWQSLPPRCVLNLNLPDVPMQQCKGLTLCPQTRAVWKDWYDHRTDPRGNSYWWLNGIIPPETVAEGTDRDMLTRGYATLTPLRFDFTDRETLARLQQNMDRQRQGSEDL.

A divalent metal cation contacts are provided by D8, D9, S40, and N95.

Belongs to the SurE nucleotidase family. Requires a divalent metal cation as cofactor.

It is found in the cytoplasm. The enzyme catalyses a ribonucleoside 5'-phosphate + H2O = a ribonucleoside + phosphate. Its function is as follows. Nucleotidase that shows phosphatase activity on nucleoside 5'-monophosphates. In Oleidesulfovibrio alaskensis (strain ATCC BAA-1058 / DSM 17464 / G20) (Desulfovibrio alaskensis), this protein is 5'-nucleotidase SurE.